Reading from the N-terminus, the 128-residue chain is Keratin-associated protein 21-1 (128 aa).

Positions 11-117 (GGCGYGSRYG…RYGCGYGSGC (107 aa)) are 51 X 2 AA repeats of G-[YCGS].

Belongs to the KRTAP type 21 family. In terms of assembly, interacts with hair keratins. Strong expression in narrowly defined pattern restricted to the lower and middle cortical regions of the hair shaft in both developing and cycling hair. During hair follicle regression (catagen), expression levels decrease until expression is no longer detectable in follicles at resting stage (telogen).

In terms of biological role, in the hair cortex, hair keratin intermediate filaments are embedded in an interfilamentous matrix, consisting of hair keratin-associated proteins (KRTAP), which are essential for the formation of a rigid and resistant hair shaft through their extensive disulfide bond cross-linking with abundant cysteine residues of hair keratins. The matrix proteins include the high-sulfur and high-glycine-tyrosine keratins. This chain is Keratin-associated protein 21-1 (Krtap21-1), found in Mus musculus (Mouse).